The sequence spans 122 residues: UPF0102 protein cgR_1859 (122 aa).

It belongs to the UPF0102 family.

The protein is UPF0102 protein cgR_1859 of Corynebacterium glutamicum (strain R).